We begin with the raw amino-acid sequence, 443 residues long: Chromosome partition protein MukF (443 aa).

Residues Leu-209–Ile-237 form a leucine-zipper region.

Belongs to the MukF family. As to quaternary structure, interacts, and probably forms a ternary complex, with MukE and MukB via its C-terminal region. The complex formation is stimulated by calcium or magnesium. It is required for an interaction between MukE and MukB.

It localises to the cytoplasm. The protein resides in the nucleoid. Its function is as follows. Involved in chromosome condensation, segregation and cell cycle progression. May participate in facilitating chromosome segregation by condensation DNA from both sides of a centrally located replisome during cell division. Not required for mini-F plasmid partitioning. Probably acts via its interaction with MukB and MukE. Overexpression results in anucleate cells. It has a calcium binding activity. The sequence is that of Chromosome partition protein MukF from Glaesserella parasuis serovar 5 (strain SH0165) (Haemophilus parasuis).